A 192-amino-acid chain; its full sequence is MAGLLALLGPAGRVGARVRPRATWLLGATAPCAPPPLALALLPPRLDARLLRTARGDCRGHQDPSQATGTTGSSVSCTEEKKQSKSQQLKKIFQEYGTVGVSLHIGISLISLGIFYMVVSSGVDMPAILLKLGFKESLVQSKMAAGTSTFVVAYAIHKLFAPVRISITLVSVPLIVRYFRKVGFFKPPAAKP.

A mitochondrion-targeting transit peptide spans 1 to 58; the sequence is MAGLLALLGPAGRVGARVRPRATWLLGATAPCAPPPLALALLPPRLDARLLRTARGDC. Residues 57–80 are disordered; sequence DCRGHQDPSQATGTTGSSVSCTEE. Positions 63–77 are enriched in polar residues; the sequence is DPSQATGTTGSSVSC. Residues 80 to 191 form the DUF1279 domain; that stretch reads EKKQSKSQQL…VGFFKPPAAK (112 aa). 2 helical membrane passes run 99–119 and 150–170; these read VGVS…YMVV and FVVA…ITLV.

The protein belongs to the FAM210 family. As to expression, expressed in late erythroblast differentiation stages. Underexpressed in ovarian cancer epithelia cells compared with normal human ovarian surface epithelia.

It localises to the mitochondrion. The protein resides in the mitochondrion outer membrane. In terms of biological role, plays a role in erythroid differentiation. Involved in cell proliferation and tumor cell growth suppression. Involved in the metabolic reprogramming of cancer cells in a PDK4-dependent manner. In Homo sapiens (Human), this protein is Protein FAM210B, mitochondrial.